We begin with the raw amino-acid sequence, 519 residues long: Membrane-bound transcription factor site-2 protease (519 aa).

Over 1-3 the chain is Cytoplasmic; the sequence is MIP. A helical membrane pass occupies residues 4–24; the sequence is VSLVVVVVGGWTVVYLTDLVL. The Lumenal segment spans residues 25–74; it reads KSSVYFKHSYEDWLENNGLSISPFHIRWQTAVFNRAFYSWGRRKARMLYQ. 2 consecutive transmembrane segments (helical) span residues 75–95 and 96–107; these read WFNF…FLLG and KTLMQTLAQMMA. Topologically, residues 108–144 are lumenal; sequence DSPSSYSSSSSSSSSSSSSSSSSSSSSSSLHNEQVLQ. The interval 115 to 135 is disordered; the sequence is SSSSSSSSSSSSSSSSSSSSS. The chain crosses the membrane as a helical span at residues 145-169; that stretch reads VVVPGINLPVNQLTYFFTAVLISGV. Position 171 (H171) interacts with Zn(2+). The active site involves E172. The next 3 membrane-spanning stretches (helical) occupy residues 174 to 186, 187 to 209, and 229 to 251; these read GHGI…QVRF, NGFG…TTHL, and FVLA…PFYY. H175 contacts Zn(2+). Residues 252-446 are Lumenal-facing; that stretch reads TGVGVLITEV…LPVVVETFVK (195 aa). N337 is a glycosylation site (N-linked (GlcNAc...) asparagine). A run of 2 helical transmembrane segments spans residues 447–464 and 465–476; these read YLIS…VPCF and ALDGQWILNSFL. Topologically, residues 477-492 are lumenal; that stretch reads DATLTSVIGDNDVKDL. Residues 493-513 form a helical membrane-spanning segment; the sequence is IGFFILLGGSVLLAANVTLGL. At 514-519 the chain is on the cytoplasmic side; the sequence is WMVTAR.

The protein belongs to the peptidase M50A family. It depends on Zn(2+) as a cofactor. In terms of tissue distribution, expressed in heart, brain, placenta, lung, liver, muscle, kidney and pancreas.

It is found in the membrane. The protein resides in the cytoplasm. The protein localises to the golgi apparatus membrane. It catalyses the reaction Cleaves several transcription factors that are type-2 transmembrane proteins within membrane-spanning domains. Known substrates include sterol regulatory element-binding protein (SREBP) -1, SREBP-2 and forms of the transcriptional activator ATF6. SREBP-2 is cleaved at the site 477-DRSRILL-|-CVLTFLCLSFNPLTSLLQWGGA-505. The residues Asn-Pro, 11 residues distal to the site of cleavage in the membrane-spanning domain, are important for cleavage by S2P endopeptidase. Replacement of either of these residues does not prevent cleavage, but there is no cleavage if both of these residues are replaced.. Functionally, zinc metalloprotease that mediates intramembrane proteolysis of proteins such as ATF6, ATF6B, SREBF1/SREBP1 and SREBF2/SREBP2. Catalyzes the second step in the proteolytic activation of the sterol regulatory element-binding proteins (SREBPs) SREBF1/SREBP1 and SREBF2/SREBP2: cleaves SREBPs within the first transmembrane segment, thereby releasing the N-terminal segment with a portion of the transmembrane segment attached. Mature N-terminal SREBP fragments shuttle to the nucleus and activate gene transcription. Also mediates the second step in the proteolytic activation of the cyclic AMP-dependent transcription factor ATF-6 (ATF6 and ATF6B). Involved in intramembrane proteolysis during bone formation. In astrocytes and osteoblasts, upon DNA damage and ER stress, mediates the second step of the regulated intramembrane proteolytic activation of the transcription factor CREB3L1, leading to the inhibition of cell-cycle progression. This is Membrane-bound transcription factor site-2 protease from Homo sapiens (Human).